A 383-amino-acid polypeptide reads, in one-letter code: S-adenosylmethionine synthase (383 aa).

Position 15 (histidine 15) interacts with ATP. Aspartate 17 contacts Mg(2+). Glutamate 43 provides a ligand contact to K(+). Residues glutamate 56 and glutamine 99 each contribute to the L-methionine site. A flexible loop region spans residues 99–109 (QSPDINQGVDK). ATP contacts are provided by residues 164–166 (DAK), 230–231 (RF), aspartate 239, 245–246 (RK), alanine 262, and lysine 266. An L-methionine-binding site is contributed by aspartate 239. Lysine 270 provides a ligand contact to L-methionine.

It belongs to the AdoMet synthase family. As to quaternary structure, homotetramer; dimer of dimers. Mg(2+) is required as a cofactor. It depends on K(+) as a cofactor.

Its subcellular location is the cytoplasm. It carries out the reaction L-methionine + ATP + H2O = S-adenosyl-L-methionine + phosphate + diphosphate. It participates in amino-acid biosynthesis; S-adenosyl-L-methionine biosynthesis; S-adenosyl-L-methionine from L-methionine: step 1/1. Its function is as follows. Catalyzes the formation of S-adenosylmethionine (AdoMet) from methionine and ATP. The overall synthetic reaction is composed of two sequential steps, AdoMet formation and the subsequent tripolyphosphate hydrolysis which occurs prior to release of AdoMet from the enzyme. This chain is S-adenosylmethionine synthase, found in Vibrio atlanticus (strain LGP32) (Vibrio splendidus (strain Mel32)).